Reading from the N-terminus, the 377-residue chain is Apelin receptor (377 aa).

The Extracellular portion of the chain corresponds to 1 to 28 (MEDDGYNYYGADNQSECDYADWTPSGAL). A glycan (N-linked (GlcNAc...) asparagine) is linked at asparagine 13. 2 cysteine pairs are disulfide-bonded: cysteine 17–cysteine 279 and cysteine 100–cysteine 179. Residues 29–52 (IPAIYILVFLLGTTGNGLVLWTVF) traverse the membrane as a helical segment. Residues 53 to 62 (WSSREKRRSA) are Cytoplasmic-facing. A helical transmembrane segment spans residues 63–84 (DIFIASLAVADLTFVVTLPLWA). The Extracellular portion of the chain corresponds to 85-97 (TYTYREFDWPFGT). A helical transmembrane segment spans residues 98-123 (FSCKLSSYLIFVNMYASVFCLTGLSF). Over 124 to 144 (DRYLAIVRPVANARLRLRVSG) the chain is Cytoplasmic. Residues 145 to 162 (AVATAVLWVLAALLAVPV) form a helical membrane-spanning segment. Topologically, residues 163–196 (MVFRSTDIPENSTKTQCYMDYSMVATSNSEWAWE) are extracellular. Asparagine 173 carries N-linked (GlcNAc...) asparagine glycosylation. Residues 197–221 (VGLGVSSTAVGFVVPFIIMLTCYFF) form a helical membrane-spanning segment. Topologically, residues 222-244 (IAQTIAGHFRKERIEGLRKRRRL) are cytoplasmic. Residues 245 to 268 (LSIIVVLVVTFALCWMPYHLVKTL) form a helical membrane-spanning segment. Residues 269–287 (YMLGNLLHWPCDFDSFLMN) lie on the Extracellular side of the membrane. A helical transmembrane segment spans residues 288-310 (VFPYCTCISYVNSCLNPFLYAFF). Residues 311–377 (DPRFRRACTS…IPYSQETLVD (67 aa)) lie on the Cytoplasmic side of the membrane. A compositionally biased stretch (low complexity) spans 335-349 (SSSAEKSASYSSGHS). The disordered stretch occupies residues 335–377 (SSSAEKSASYSSGHSQGPGPNMCKGGEPMHEKSIPYSQETLVD).

Belongs to the G-protein coupled receptor 1 family. Homodimer; dimerization inhibits APLNR-mediated G protein and beta-arrestin signaling pathways compared to monomeric APLNR. Widely expressed. Highest expression in the lung, lower in the heart, placenta, ovary, skeletal muscle, mammary gland, kidney and several structures in the brain as the hypothalamus (supraoptic and periventricular nuclei), pituitary, olfactory bulb and pineal gland.

Its subcellular location is the cell membrane. In terms of biological role, g protein-coupled receptor for peptide hormones apelin (APLN) and apelin receptor early endogenous ligand (APELA/ELA), that plays a role in the regulation of normal cardiovascular function and fluid homeostasis. When acting as apelin receptor, activates both G(i) protein pathway that inhibits adenylate cyclase activity, and the beta-arrestin pathway that promotes internalization of the receptor. APLNR/APJ also functions as mechanoreceptor that is activated by pathological stimuli in a G-protein-independent fashion to induce beta-arrestin signaling, hence eliciting cardiac hypertrophy. However, the presence of apelin ligand blunts cardiac hypertrophic induction from APLNR/APJ on response to pathological stimuli. Plays a key role in early development such as gastrulation, blood vessels formation and heart morphogenesis by acting as a APELA receptor. May promote angioblast migration toward the embryonic midline, i.e. the position of the future vessel formation, during vasculogenesis. Promotes sinus venosus (SV)-derived endothelial cells migration into the developing heart to promote coronary blood vessel development. Also plays a role in various processes in adults such as regulation of blood vessel formation, blood pressure, heart contractility and heart failure. In Rattus norvegicus (Rat), this protein is Apelin receptor.